Here is a 151-residue protein sequence, read N- to C-terminus: Arginine repressor (151 aa).

The protein belongs to the ArgR family.

Its subcellular location is the cytoplasm. It participates in amino-acid biosynthesis; L-arginine biosynthesis [regulation]. Its function is as follows. Regulates arginine biosynthesis genes. The chain is Arginine repressor from Moorella thermoacetica (strain ATCC 39073 / JCM 9320).